The following is a 140-amino-acid chain: Putative nickel-responsive regulator (140 aa).

The Ni(2+) site is built by His-81, His-92, His-94, and Cys-100.

Belongs to the transcriptional regulatory CopG/NikR family. Ni(2+) serves as cofactor.

Transcriptional regulator. In Methanocella arvoryzae (strain DSM 22066 / NBRC 105507 / MRE50), this protein is Putative nickel-responsive regulator.